A 379-amino-acid chain; its full sequence is Omega-3 fatty acid desaturase, endoplasmic reticulum (379 aa).

The chain crosses the membrane as a helical span at residues 52–72 (LSYVVRDVIFVATLIGIAIHL). Positions 97–101 (HDCGH) match the Histidine box-1 motif. The short motif at 133-137 (HKTHH) is the Histidine box-2 element. The next 2 helical transmembrane spans lie at 213–233 (TLCWTVMAALLLYLCTAFGSL) and 236–256 (FKIYGAPYLIFVMWLDFVTYL). The Histidine box-3 signature appears at 300-304 (HVIHH).

The protein belongs to the fatty acid desaturase type 1 family.

It localises to the endoplasmic reticulum membrane. It functions in the pathway lipid metabolism; polyunsaturated fatty acid biosynthesis. ER (microsomal) omega-3 fatty acid desaturase introduces the third double bond in the biosynthesis of 18:3 fatty acids, important constituents of plant membranes. It is thought to use cytochrome b5 as an electron donor and to act on fatty acids esterified to phosphatidylcholine and, possibly, other phospholipids. The polypeptide is Omega-3 fatty acid desaturase, endoplasmic reticulum (FAD3) (Nicotiana tabacum (Common tobacco)).